Consider the following 367-residue polypeptide: Probable butyrate kinase (367 aa).

Belongs to the acetokinase family.

It localises to the cytoplasm. The catalysed reaction is butanoate + ATP = butanoyl phosphate + ADP. This Exiguobacterium sibiricum (strain DSM 17290 / CCUG 55495 / CIP 109462 / JCM 13490 / 255-15) protein is Probable butyrate kinase.